The following is a 277-amino-acid chain: Bifunctional protein FolD (277 aa).

Residues G160 to S162, S185, and I226 contribute to the NADP(+) site.

Belongs to the tetrahydrofolate dehydrogenase/cyclohydrolase family. In terms of assembly, homodimer.

The catalysed reaction is (6R)-5,10-methylene-5,6,7,8-tetrahydrofolate + NADP(+) = (6R)-5,10-methenyltetrahydrofolate + NADPH. It catalyses the reaction (6R)-5,10-methenyltetrahydrofolate + H2O = (6R)-10-formyltetrahydrofolate + H(+). It participates in one-carbon metabolism; tetrahydrofolate interconversion. Catalyzes the oxidation of 5,10-methylenetetrahydrofolate to 5,10-methenyltetrahydrofolate and then the hydrolysis of 5,10-methenyltetrahydrofolate to 10-formyltetrahydrofolate. The sequence is that of Bifunctional protein FolD from Ruthia magnifica subsp. Calyptogena magnifica.